Here is a 1247-residue protein sequence, read N- to C-terminus: Clustered mitochondria protein homolog (1247 aa).

A disordered region spans residues 1–43 (MTLGSETKTDVEVPIINGKHEIPQEENDSGHSSINTPDSSEPD). Positions 30 to 39 (GHSSINTPDS) are enriched in polar residues. Positions 329 to 579 (SDSLRAIELT…RSMPPDVHYL (251 aa)) constitute a Clu domain. Positions 1222-1247 (GKQQNGTTEESKTTDVAAQLDNETLD) are disordered.

It belongs to the CLU family.

It localises to the cytoplasm. In terms of biological role, mRNA-binding protein involved in proper cytoplasmic distribution of mitochondria. This chain is Clustered mitochondria protein homolog, found in Caenorhabditis elegans.